The sequence spans 193 residues: UPF0301 protein SAV_5129 (193 aa).

This sequence belongs to the UPF0301 (AlgH) family.

In Streptomyces avermitilis (strain ATCC 31267 / DSM 46492 / JCM 5070 / NBRC 14893 / NCIMB 12804 / NRRL 8165 / MA-4680), this protein is UPF0301 protein SAV_5129.